A 102-amino-acid chain; its full sequence is Small ribosomal subunit protein uS10 (102 aa).

Belongs to the universal ribosomal protein uS10 family. As to quaternary structure, part of the 30S ribosomal subunit.

In terms of biological role, involved in the binding of tRNA to the ribosomes. The chain is Small ribosomal subunit protein uS10 from Mesoplasma florum (strain ATCC 33453 / NBRC 100688 / NCTC 11704 / L1) (Acholeplasma florum).